A 721-amino-acid chain; its full sequence is Catalase-peroxidase 1 (721 aa).

The tryptophyl-tyrosyl-methioninium (Trp-Tyr) (with M-249) cross-link spans 98–223 (WHAAGSYRVA…LAAVQMGLIY (126 aa)). H99 serves as the catalytic Proton acceptor. Residues 223 to 249 (YVNPEGVNGQPDPLRTAQDVRVTFGRM) constitute a cross-link (tryptophyl-tyrosyl-methioninium (Tyr-Met) (with W-98)). Residue H264 participates in heme b binding.

The protein belongs to the peroxidase family. Peroxidase/catalase subfamily. Homodimer or homotetramer. The cofactor is heme b. Formation of the three residue Trp-Tyr-Met cross-link is important for the catalase, but not the peroxidase activity of the enzyme.

The catalysed reaction is H2O2 + AH2 = A + 2 H2O. It carries out the reaction 2 H2O2 = O2 + 2 H2O. Functionally, bifunctional enzyme with both catalase and broad-spectrum peroxidase activity. The polypeptide is Catalase-peroxidase 1 (Legionella pneumophila subsp. pneumophila (strain Philadelphia 1 / ATCC 33152 / DSM 7513)).